Reading from the N-terminus, the 390-residue chain is GTPase Obg (390 aa).

The Obg domain occupies 1–159; that stretch reads MKFVDEASIL…RELLLELMLL (159 aa). Positions 127–147 are disordered; it reads NTRFKSSVNRTPRQKTNGTPG. Residues 129-145 show a composition bias toward polar residues; sequence RFKSSVNRTPRQKTNGT. An OBG-type G domain is found at 160–333; it reads ADVGMLGMPN…LCWDVMTFII (174 aa). GTP contacts are provided by residues 166–173, 191–195, 213–216, 283–286, and 314–316; these read GMPNAGKS, FTTLV, DIPG, NKID, and SAA. Mg(2+)-binding residues include S173 and T193.

It belongs to the TRAFAC class OBG-HflX-like GTPase superfamily. OBG GTPase family. In terms of assembly, monomer. Mg(2+) serves as cofactor.

The protein localises to the cytoplasm. An essential GTPase which binds GTP, GDP and possibly (p)ppGpp with moderate affinity, with high nucleotide exchange rates and a fairly low GTP hydrolysis rate. Plays a role in control of the cell cycle, stress response, ribosome biogenesis and in those bacteria that undergo differentiation, in morphogenesis control. The chain is GTPase Obg from Shigella dysenteriae serotype 1 (strain Sd197).